Consider the following 389-residue polypeptide: Cytochrome b (389 aa).

4 helical membrane-spanning segments follow: residues 36–56 (MGSL…FLAM), 80–102 (WLIR…THIA), 117–137 (VWTV…LGYC), and 183–203 (FFAF…MHMM). 2 residues coordinate heme b: His86 and His100. His187 and His201 together coordinate heme b. Residue His206 coordinates a ubiquinone. 4 consecutive transmembrane segments (helical) span residues 229 to 249 (FVFK…LFVF), 293 to 313 (LLGV…PITD), 325 to 345 (LSKF…IIGM), and 352 to 372 (FVLI…IIVP).

This sequence belongs to the cytochrome b family. In terms of assembly, fungal cytochrome b-c1 complex contains 10 subunits; 3 respiratory subunits, 2 core proteins and 5 low-molecular weight proteins. Cytochrome b-c1 complex is a homodimer. Heme b is required as a cofactor.

It is found in the mitochondrion inner membrane. Its function is as follows. Component of the ubiquinol-cytochrome c reductase complex (complex III or cytochrome b-c1 complex) that is part of the mitochondrial respiratory chain. The b-c1 complex mediates electron transfer from ubiquinol to cytochrome c. Contributes to the generation of a proton gradient across the mitochondrial membrane that is then used for ATP synthesis. This chain is Cytochrome b (COB), found in Vanderwaltozyma polyspora (strain ATCC 22028 / DSM 70294 / BCRC 21397 / CBS 2163 / NBRC 10782 / NRRL Y-8283 / UCD 57-17) (Kluyveromyces polysporus).